The sequence spans 559 residues: D-2-hydroxyglutarate dehydrogenase, mitochondrial (559 aa).

Residues 1–78 constitute a mitochondrion transit peptide; the sequence is MMMQKLRRSG…GMLLQQYKCF (78 aa). The FAD-binding PCMH-type domain occupies 130-309; it reads YKGSSKLMLL…TKVSILTQPK (180 aa).

Belongs to the FAD-binding oxidoreductase/transferase type 4 family. Homodimer. The cofactor is FAD.

The protein localises to the mitochondrion. It catalyses the reaction (R)-2-hydroxyglutarate + A = 2-oxoglutarate + AH2. Its function is as follows. Catalyzes the oxidation of (R)-2-hydroxyglutarate to 2-oxoglutarate. May be involved in the catabolism of propionyl-CoA derived from beta-oxidation. Involved in degradation of lysine for the supply of carbon and electrons to the ETF/ETFQO complex during dark-induced sugar starvation. The sequence is that of D-2-hydroxyglutarate dehydrogenase, mitochondrial (D2HGDH) from Arabidopsis thaliana (Mouse-ear cress).